The sequence spans 474 residues: 3-isopropylmalate dehydratase large subunit (474 aa).

3 residues coordinate [4Fe-4S] cluster: cysteine 355, cysteine 415, and cysteine 418.

The protein belongs to the aconitase/IPM isomerase family. LeuC type 1 subfamily. In terms of assembly, heterodimer of LeuC and LeuD. [4Fe-4S] cluster serves as cofactor.

The enzyme catalyses (2R,3S)-3-isopropylmalate = (2S)-2-isopropylmalate. The protein operates within amino-acid biosynthesis; L-leucine biosynthesis; L-leucine from 3-methyl-2-oxobutanoate: step 2/4. Its function is as follows. Catalyzes the isomerization between 2-isopropylmalate and 3-isopropylmalate, via the formation of 2-isopropylmaleate. This Shewanella sp. (strain MR-7) protein is 3-isopropylmalate dehydratase large subunit.